The following is a 120-amino-acid chain: uncharacterized protein (120 aa).

Residues 22–44 (ITVASCIGAAQGALFSIASALLL) form a helical membrane-spanning segment. The N-linked (GlcNAc...) asparagine glycan is linked to Asn114.

The protein resides in the membrane. This is an uncharacterized protein from Saccharomyces cerevisiae (strain ATCC 204508 / S288c) (Baker's yeast).